Consider the following 300-residue polypeptide: MTGHTLVRRKSIGRDKRLVGRSRRQWRDMNLPSYGNSKGTNMDIYRAYFEFIAESPADELMLVKDLVTPLIKTTSISLPFDMSEAVADNCLSLSGMGYYLGVGGCCPTCVSSGDPRLGRNDRAALILAYVQQINNIYHYRIFLASIIVLGDRLRGDARDKDMESILTRIIAIPELFFAYYVLLDSGIKNVKVLFYLDREAGSSEYMMYIVFPGKALHLHYRLIDCMKSACKSYRIIAHVWRTNFLLVIRKEYDRQTDSCDVPAVNAEDVYCKLCDLNIDGELLLEYGKLYSAFDEFLPPR.

The CCCH-type zinc finger occupies Cys90–His217.

This sequence belongs to the herpesviridae NEC1 protein family. In terms of assembly, forms a heterohexameric complex with NEC2. Interacts with capsid vertex specific component 2/CVC2; this interaction directs the capsid to the host inner nuclear membrane to initiate budding. Phosphorylated at serine residues in the N-terminus. This phosphorylation regulates the localization within the inner nuclear membrane.

The protein resides in the host nucleus inner membrane. In terms of biological role, plays an essential role in virion nuclear egress, the first step of virion release from infected cell. Within the host nucleus, NEC1 interacts with the newly formed capsid through the vertexes and directs it to the inner nuclear membrane by associating with NEC2. Induces the budding of the capsid at the inner nuclear membrane as well as its envelopment into the perinuclear space. There, the NEC1/NEC2 complex promotes the fusion of the enveloped capsid with the outer nuclear membrane and the subsequent release of the viral capsid into the cytoplasm where it will reach the secondary budding sites in the host Golgi or trans-Golgi network. This Gallid herpesvirus 2 (strain Chicken/Md5/ATCC VR-987) (GaHV-2) protein is Nuclear egress protein 1.